Here is a 708-residue protein sequence, read N- to C-terminus: Transcriptional regulator nsrM (708 aa).

The segment at residues 37–63 (CVRCQQRKVRCDHKSPCGNCVASDSQC) is a DNA-binding region (zn(2)-C6 fungal-type).

The protein resides in the nucleus. Transcriptional regulator; part of the gene cluster that mediates the biosynthesis of the tetrahydroxanthone dimer neosartorin, which exhibits antibacterial activity. In Aspergillus novofumigatus (strain IBT 16806), this protein is Transcriptional regulator nsrM.